The sequence spans 798 residues: Gelsolin (798 aa).

An N-terminal signal peptide occupies residues 1-28 (MDASGAATMAVLSSLLVFLALSSSLCSA). The interval 57–181 (RVMHPSFANA…YEQGGVGTGF (125 aa)) is actin-severing. A Gelsolin-like 1 repeat occupies 78 to 131 (ENFEPVIYPKTNYGKFYTGDSFIVLNTIENKKDKKLSWDVHFWLGLETSTDEAG). Tyrosine 90 carries the post-translational modification Phosphotyrosine; by SRC. The actin-actin interfilament contact point stretch occupies residues 128–131 (DEAG). A 1,2-diacyl-sn-glycero-3-phospho-(1D-myo-inositol-4,5-bisphosphate) is bound by residues 167–174 (KNGIRYEQ) and 193–201 (RLFQVKGKR). Gelsolin-like repeat units follow at residues 203-243 (VRVR…VEKL), 322-365 (LKVD…KEKT), 474-524 (IVVS…AARK), and 583-625 (VHAS…FEKQ). Residues 451-792 (MPDHGQNVIE…SYEDMKQLVI (342 aa)) form an actin-binding, Ca-sensitive region. Ca(2+) is bound at residue aspartate 599. A Phosphotyrosine; by SRC modification is found at tyrosine 612. Residue glutamate 623 participates in Ca(2+) binding. At tyrosine 662 the chain carries Phosphotyrosine; by SRC. Residues 689 to 730 (LKVEEVAQYEQEDLDSDDIMLLDAGDEIYLWVGYGVSEEENG) form a Gelsolin-like 6 repeat. The Ca(2+) site is built by aspartate 705, aspartate 706, and glutamate 728.

This sequence belongs to the villin/gelsolin family. As to quaternary structure, binds to actin and to fibronectin. In terms of tissue distribution, isoform 1 and isoform 2 are ubiquitously expressed in early embryo. Isoform 1 is expressed in the fat body, and is abundant in hemolymph. Isoform 2 is expressed in parts of the gut.

Its subcellular location is the cytoplasm. It localises to the cytoskeleton. It is found in the secreted. Calcium-regulated, actin-modulating protein that binds to the plus (or barbed) ends of actin monomers or filaments, preventing monomer exchange (end-blocking or capping). It can promote the assembly of monomers into filaments (nucleation) as well as sever filaments already formed. The sequence is that of Gelsolin (Gel) from Drosophila melanogaster (Fruit fly).